Reading from the N-terminus, the 505-residue chain is MADYVLAIDQGTTSSRAIIFDHSGTIVATGQKEHEQIFPRAGWVEHDPEEIWTNVRDVVGQALGRASVRASNIAAIGITNQRETAVVWDRTTGKPVYNAIVWQDTRTQRIVEELGGSEGAEKYKARVGLPLATYFSGPKIKWILDNVDGAREAAERGDLLFGNTDTWVLWNMTGGVNGGVHVTDVTNASRTMLMDLDTLSWNPDIAADMGIPVSMLPEIRSSSEVYGKDREEGLLAGVPIAGILGDQQAATFGQACFEIGMAKNTYGTGNFMLMNTGTEQVASENGLLTTVCYKIGDQPQVYALEGSIAVTGSLVQWLRDNLKVISTAPEIENLALTVEDNGGAYFVPAFSGLFAPYWRADARGALVGLTRYVSLGHIARAALEATAFQSAEVLDAMKADSGVDLTELKVDGGMVANEVLMQFQADILGVDVVRPKVAETTALGAAYAAGIAVGFWNGEQDVIDNWAEDKRWTPQMDRGDRDRLYRNWKKAVTKTFDWVDDDVEN.

Thr12 contributes to the ADP binding site. ATP is bound by residues Thr12, Thr13, and Ser14. A sn-glycerol 3-phosphate-binding site is contributed by Thr12. Residue Arg16 coordinates ADP. Sn-glycerol 3-phosphate contacts are provided by Arg82, Glu83, Tyr134, and Asp246. 5 residues coordinate glycerol: Arg82, Glu83, Tyr134, Asp246, and Gln247. The ADP site is built by Thr268 and Gly312. ATP contacts are provided by Thr268, Gly312, Gln316, and Gly413. Positions 413 and 417 each coordinate ADP.

Belongs to the FGGY kinase family.

The catalysed reaction is glycerol + ATP = sn-glycerol 3-phosphate + ADP + H(+). It participates in polyol metabolism; glycerol degradation via glycerol kinase pathway; sn-glycerol 3-phosphate from glycerol: step 1/1. With respect to regulation, inhibited by fructose 1,6-bisphosphate (FBP). Key enzyme in the regulation of glycerol uptake and metabolism. Catalyzes the phosphorylation of glycerol to yield sn-glycerol 3-phosphate. The chain is Glycerol kinase from Beutenbergia cavernae (strain ATCC BAA-8 / DSM 12333 / CCUG 43141 / JCM 11478 / NBRC 16432 / NCIMB 13614 / HKI 0122).